Reading from the N-terminus, the 358-residue chain is DnaJ homolog subfamily B member 11 (358 aa).

Positions 1–22 are cleaved as a signal peptide; sequence MAPQNLSTFCLLLLYLIGTVIA. The J domain maps to 25–90; the sequence is DFYKILGVPR…EKRKQYDTYG (66 aa). Threonine 188 carries the phosphothreonine modification. A glycan (N-linked (GlcNAc...) asparagine) is linked at asparagine 261.

Part of a large chaperone multiprotein complex comprising DNAJB11, HSP90B1, HSPA5, HYOU, PDIA2, PDIA4, PDIA6, PPIB, SDF2L1, UGGT1 and very small amounts of ERP29, but not, or at very low levels, CALR nor CANX. Binds to denatured substrates in an ATP-independent manner. Interacts via the J domain with HSPA5 in an ATP-dependent manner. Contains high-mannose Endo H-sensitive carbohydrates. Post-translationally, cys-169, Cys-171, Cys-193 and Cys-196 form intramolecular disulfide bonds. The preferential partner for each Cys is not known.

It localises to the endoplasmic reticulum lumen. Its function is as follows. As a co-chaperone for HSPA5 it is required for proper folding, trafficking or degradation of proteins. Binds directly to both unfolded proteins that are substrates for ERAD and nascent unfolded peptide chains, but dissociates from the HSPA5-unfolded protein complex before folding is completed. May help recruiting HSPA5 and other chaperones to the substrate. Stimulates HSPA5 ATPase activity. It is necessary for maturation and correct trafficking of PKD1. This Mus musculus (Mouse) protein is DnaJ homolog subfamily B member 11 (Dnajb11).